We begin with the raw amino-acid sequence, 314 residues long: tRNA dimethylallyltransferase (314 aa).

Residue 10–17 (GPTAVGKT) participates in ATP binding. 12-17 (TAVGKT) lines the substrate pocket. Interaction with substrate tRNA regions lie at residues 35–38 (DSMQ), 160–164 (RRVIR), 239–244 (QAIGYK), and 272–279 (KRQLTWFR).

Belongs to the IPP transferase family. Monomer. It depends on Mg(2+) as a cofactor.

The catalysed reaction is adenosine(37) in tRNA + dimethylallyl diphosphate = N(6)-dimethylallyladenosine(37) in tRNA + diphosphate. In terms of biological role, catalyzes the transfer of a dimethylallyl group onto the adenine at position 37 in tRNAs that read codons beginning with uridine, leading to the formation of N6-(dimethylallyl)adenosine (i(6)A). This Halalkalibacterium halodurans (strain ATCC BAA-125 / DSM 18197 / FERM 7344 / JCM 9153 / C-125) (Bacillus halodurans) protein is tRNA dimethylallyltransferase (miaA).